A 25-amino-acid polypeptide reads, in one-letter code: Caerin-1.9 (25 aa).

Leu-25 bears the Leucine amide mark.

It belongs to the frog skin active peptide (FSAP) family. Caerin subfamily. In terms of tissue distribution, expressed by the skin dorsal glands.

The protein resides in the secreted. In terms of biological role, antimicrobial peptide. Adopts an alpha helical conformation which can disrupt bacterial membranes. Strongly inhibits the formation of NO by neuronal nitric oxide synthase (nNOS) at micromolar concentrations. Acts by a non-competitive mechanism, probably by binding to calcium/calmodulin and as a consequence blocking calmodulin attachment to nNOS. In Ranoidea chloris (Red-eyed tree frog), this protein is Caerin-1.9.